Reading from the N-terminus, the 401-residue chain is Argininosuccinate synthase (401 aa).

ATP-binding positions include 9–17 and Ala35; that span reads AYSGGLDTS. Tyr86 lines the L-citrulline pocket. Gly116 is a binding site for ATP. L-aspartate is bound by residues Thr118, Asn122, and Asp123. L-citrulline is bound at residue Asn122. Arg126, Ser175, Ser184, Glu261, and Tyr273 together coordinate L-citrulline.

This sequence belongs to the argininosuccinate synthase family. Type 1 subfamily. Homotetramer.

The protein resides in the cytoplasm. The enzyme catalyses L-citrulline + L-aspartate + ATP = 2-(N(omega)-L-arginino)succinate + AMP + diphosphate + H(+). Its pathway is amino-acid biosynthesis; L-arginine biosynthesis; L-arginine from L-ornithine and carbamoyl phosphate: step 2/3. The sequence is that of Argininosuccinate synthase from Aquifex aeolicus (strain VF5).